Here is a 126-residue protein sequence, read N- to C-terminus: Histone H2B type 2-E (126 aa).

Residues 1-12 are compositionally biased toward low complexity; it reads MPEPAKSAPAPK. A disordered region spans residues 1-35; sequence MPEPAKSAPAPKKGSKKAVTKAQKKDGKKRKRSRK. Position 2 is an N-acetylproline (Pro2). Glu3 carries the ADP-ribosyl glutamic acid modification. At Lys6 the chain carries N6-(2-hydroxyisobutyryl)lysine; alternate. The residue at position 6 (Lys6) is an N6-(beta-hydroxybutyryl)lysine; alternate. An N6-acetyllysine; alternate modification is found at Lys6. The residue at position 6 (Lys6) is an N6-butyryllysine; alternate. An N6-crotonyllysine; alternate modification is found at Lys6. N6-lactoyllysine; alternate is present on Lys6. A Glycyl lysine isopeptide (Lys-Gly) (interchain with G-Cter in SUMO2); alternate cross-link involves residue Lys6. Ser7 carries the post-translational modification ADP-ribosylserine. Residue Lys12 is modified to N6-(beta-hydroxybutyryl)lysine; alternate. 2 positions are modified to N6-acetyllysine; alternate: Lys12 and Lys13. An N6-crotonyllysine; alternate mark is found at Lys12 and Lys13. Lys12 is subject to N6-lactoyllysine; alternate. N6-(2-hydroxyisobutyryl)lysine; alternate is present on Lys13. At Ser15 the chain carries Phosphoserine; by STK4/MST1. N6-acetyllysine; alternate is present on residues Lys16, Lys17, Lys21, and Lys24. Lys16, Lys17, Lys21, and Lys24 each carry N6-crotonyllysine; alternate. An N6-lactoyllysine; alternate mark is found at Lys16, Lys17, Lys21, and Lys24. Residues Lys17 and Lys21 each carry the N6-(beta-hydroxybutyryl)lysine; alternate modification. Lys17 bears the N6-glutaryllysine; alternate mark. Residues Lys21 and Lys24 each carry the N6-(2-hydroxyisobutyryl)lysine; alternate modification. Lys21 is modified (N6-butyryllysine; alternate). A Glycyl lysine isopeptide (Lys-Gly) (interchain with G-Cter in SUMO2); alternate cross-link involves residue Lys21. Lys25 is modified (N6-(2-hydroxyisobutyryl)lysine). At Lys35 the chain carries N6-(2-hydroxyisobutyryl)lysine; alternate. N6-(beta-hydroxybutyryl)lysine; alternate is present on Lys35. Position 35 is an N6-crotonyllysine; alternate (Lys35). At Lys35 the chain carries N6-glutaryllysine; alternate. The residue at position 35 (Lys35) is an N6-succinyllysine; alternate. A Glycyl lysine isopeptide (Lys-Gly) (interchain with G-Cter in ubiquitin); alternate cross-link involves residue Lys35. Glu36 carries the post-translational modification PolyADP-ribosyl glutamic acid. Phosphoserine; by AMPK is present on Ser37. N6-(2-hydroxyisobutyryl)lysine; alternate occurs at positions 44, 47, and 58. Lys44 carries the post-translational modification N6-lactoyllysine; alternate. An N6-glutaryllysine; alternate mark is found at Lys44 and Lys47. Lys47 bears the N6-methyllysine; alternate mark. N6,N6-dimethyllysine; alternate is present on Lys58. Arg80 carries the dimethylated arginine modification. Lys86 bears the N6-(2-hydroxyisobutyryl)lysine; alternate mark. Lys86 is modified (N6-(beta-hydroxybutyryl)lysine; alternate). Lys86 is modified (N6-acetyllysine; alternate). Lys86 carries the post-translational modification N6-lactoyllysine; alternate. An N6,N6,N6-trimethyllysine; alternate modification is found at Lys86. Omega-N-methylarginine is present on residues Arg87 and Arg93. Lys109 carries the N6-(2-hydroxyisobutyryl)lysine; alternate modification. Residue Lys109 is modified to N6-lactoyllysine; alternate. Lys109 carries the post-translational modification N6-glutaryllysine; alternate. Lys109 carries the N6-methyllysine; alternate modification. Residue Ser113 is glycosylated (O-linked (GlcNAc) serine). A Phosphothreonine modification is found at Thr116. 2 positions are modified to N6-(2-hydroxyisobutyryl)lysine; alternate: Lys117 and Lys121. Lys117 and Lys121 each carry N6-(beta-hydroxybutyryl)lysine; alternate. Residues Lys117 and Lys121 each carry the N6-lactoyllysine; alternate modification. N6-glutaryllysine; alternate occurs at positions 117 and 121. N6-succinyllysine; alternate is present on residues Lys117 and Lys121. The residue at position 117 (Lys117) is an N6-malonyllysine; alternate. At Lys117 the chain carries N6-methylated lysine; alternate. A Glycyl lysine isopeptide (Lys-Gly) (interchain with G-Cter in ubiquitin); alternate cross-link involves residue Lys121.

This sequence belongs to the histone H2B family. The nucleosome is a histone octamer containing two molecules each of H2A, H2B, H3 and H4 assembled in one H3-H4 heterotetramer and two H2A-H2B heterodimers. The octamer wraps approximately 147 bp of DNA. Post-translationally, monoubiquitination at Lys-35 (H2BK34Ub) by the MSL1/MSL2 dimer is required for histone H3 'Lys-4' (H3K4me) and 'Lys-79' (H3K79me) methylation and transcription activation at specific gene loci, such as HOXA9 and MEIS1 loci. Similarly, monoubiquitination at Lys-121 (H2BK120Ub) by the RNF20/40 complex gives a specific tag for epigenetic transcriptional activation and is also prerequisite for histone H3 'Lys-4' and 'Lys-79' methylation. It also functions cooperatively with the FACT dimer to stimulate elongation by RNA polymerase II. H2BK120Ub also acts as a regulator of mRNA splicing: deubiquitination by USP49 is required for efficient cotranscriptional splicing of a large set of exons. In terms of processing, phosphorylation at Ser-37 (H2BS36ph) by AMPK in response to stress promotes transcription. Phosphorylated on Ser-15 (H2BS14ph) by STK4/MST1 during apoptosis; which facilitates apoptotic chromatin condensation. Also phosphorylated on Ser-15 in response to DNA double strand breaks (DSBs), and in correlation with somatic hypermutation and immunoglobulin class-switch recombination. GlcNAcylation at Ser-113 promotes monoubiquitination of Lys-121. It fluctuates in response to extracellular glucose, and associates with transcribed genes. Post-translationally, ADP-ribosylated by PARP1 or PARP2 on Ser-7 (H2BS6ADPr) in response to DNA damage. H2BS6ADPr promotes recruitment of CHD1L. Mono-ADP-ribosylated on Glu-3 (H2BE2ADPr) by PARP3 in response to single-strand breaks. Poly ADP-ribosylation on Glu-36 (H2BE35ADPr) by PARP1 regulates adipogenesis: it inhibits phosphorylation at Ser-37 (H2BS36ph), thereby blocking expression of pro-adipogenetic genes. In terms of processing, crotonylation (Kcr) is specifically present in male germ cells and marks testis-specific genes in post-meiotic cells, including X-linked genes that escape sex chromosome inactivation in haploid cells. Crotonylation marks active promoters and enhancers and confers resistance to transcriptional repressors. It is also associated with post-meiotically activated genes on autosomes. Lactylated in macrophages by EP300/P300 by using lactoyl-CoA directly derived from endogenous or exogenous lactate, leading to stimulates gene transcription.

It is found in the nucleus. The protein localises to the chromosome. Functionally, core component of nucleosome. Nucleosomes wrap and compact DNA into chromatin, limiting DNA accessibility to the cellular machineries which require DNA as a template. Histones thereby play a central role in transcription regulation, DNA repair, DNA replication and chromosomal stability. DNA accessibility is regulated via a complex set of post-translational modifications of histones, also called histone code, and nucleosome remodeling. Has broad antibacterial activity. May contribute to the formation of the functional antimicrobial barrier of the colonic epithelium, and to the bactericidal activity of amniotic fluid. This Homo sapiens (Human) protein is Histone H2B type 2-E.